The sequence spans 265 residues: MQPDLHCRTLAAHTLKHFRALSPLTHCMTNDVVQTFTANTLLALGASPAMVIDPVEARPFAAIANALLVNVGTLTASRADAMRAAVESAYDAKTPWTLDPVAVGALEFRRRFCLDLLSLRPAAIRGNASEILALSGMALGGRGVDTTEAALAALPAAQALAHQIDCIVVVTGEIDYVTNGQRTLSIPGGDPLMTRIVGTGCALSAVVAASCALPGAALDNVASACCWMKLAGQAAAERSEGPGSFIPAFLDALYHLDVEAANEEN.

Met50 serves as a coordination point for substrate. ATP contacts are provided by Arg125 and Thr171. Substrate is bound at residue Gly198.

It belongs to the Thz kinase family. It depends on Mg(2+) as a cofactor.

The catalysed reaction is 5-(2-hydroxyethyl)-4-methylthiazole + ATP = 4-methyl-5-(2-phosphooxyethyl)-thiazole + ADP + H(+). It participates in cofactor biosynthesis; thiamine diphosphate biosynthesis; 4-methyl-5-(2-phosphoethyl)-thiazole from 5-(2-hydroxyethyl)-4-methylthiazole: step 1/1. Its function is as follows. Catalyzes the phosphorylation of the hydroxyl group of 4-methyl-5-beta-hydroxyethylthiazole (THZ). In Salmonella choleraesuis (strain SC-B67), this protein is Hydroxyethylthiazole kinase.